The sequence spans 365 residues: 2-aminoethylphosphonate--pyruvate transaminase (365 aa).

Lys-194 carries the post-translational modification N6-(pyridoxal phosphate)lysine.

Belongs to the class-V pyridoxal-phosphate-dependent aminotransferase family. PhnW subfamily. As to quaternary structure, homodimer. Pyridoxal 5'-phosphate is required as a cofactor.

It catalyses the reaction (2-aminoethyl)phosphonate + pyruvate = phosphonoacetaldehyde + L-alanine. Its function is as follows. Involved in phosphonate degradation. This is 2-aminoethylphosphonate--pyruvate transaminase from Bacillus thuringiensis subsp. konkukian (strain 97-27).